Consider the following 1043-residue polypeptide: Isoleucine--tRNA ligase (1043 aa).

Residues 49–59 (PFATGLPHYGH) carry the 'HIGH' region motif. The 'KMSKS' region signature appears at 592-596 (KMSKR). An ATP-binding site is contributed by Lys-595.

This sequence belongs to the class-I aminoacyl-tRNA synthetase family. IleS type 2 subfamily. In terms of assembly, monomer. The cofactor is Zn(2+).

The protein resides in the cytoplasm. The enzyme catalyses tRNA(Ile) + L-isoleucine + ATP = L-isoleucyl-tRNA(Ile) + AMP + diphosphate. Catalyzes the attachment of isoleucine to tRNA(Ile). As IleRS can inadvertently accommodate and process structurally similar amino acids such as valine, to avoid such errors it has two additional distinct tRNA(Ile)-dependent editing activities. One activity is designated as 'pretransfer' editing and involves the hydrolysis of activated Val-AMP. The other activity is designated 'posttransfer' editing and involves deacylation of mischarged Val-tRNA(Ile). The polypeptide is Isoleucine--tRNA ligase (Chlamydia abortus (strain DSM 27085 / S26/3) (Chlamydophila abortus)).